Reading from the N-terminus, the 798-residue chain is Nuclear cap-binding protein subunit 1 (798 aa).

The MIF4G domain occupies 28–241; it reads EKKLQGVIGK…SLSAQIEALR (214 aa). The disordered stretch occupies residues 663–686; it reads NKIKEEDDEESDIKMDEDETKEEK. Over residues 668–682 the composition is skewed to acidic residues; sequence EDDEESDIKMDEDET.

Belongs to the NCBP1 family. As to quaternary structure, component of the nuclear cap-binding complex (CBC), a heterodimer composed of ncbp-1 and ncbp-1 that interacts with m7GpppG-capped RNA.

The protein localises to the nucleus. Functionally, component of the cap-binding complex (CBC), which binds cotranscriptionally to the 5'-cap of pre-mRNAs and is involved in various processes such as pre-mRNA splicing and RNA-mediated gene silencing (RNAi). The CBC complex is involved in miRNA-mediated RNA interference and is required for primary microRNAs (miRNAs) processing. In the CBC complex, ncbp-1 does not bind directly capped RNAs (m7GpppG-capped RNA) but is required to stabilize the movement of the N-terminal loop of ncbp-2 and lock the CBC into a high affinity cap-binding state with the cap structure. The chain is Nuclear cap-binding protein subunit 1 (ncbp-1) from Caenorhabditis elegans.